The primary structure comprises 148 residues: Basic leucine zipper 4 (148 aa).

The bZIP domain occupies 48–97; sequence DDKKRRRTISNRESAKRSRMKKKKRFEELTEEVNRLNIRNQELKNRLANV. The tract at residues 50–70 is disordered; that stretch reads KKRRRTISNRESAKRSRMKKK. Positions 50 to 72 are basic motif; it reads KKRRRTISNRESAKRSRMKKKKR. The leucine-zipper stretch occupies residues 76–90; that stretch reads LTEEVNRLNIRNQEL.

It localises to the nucleus. Probable transcription factor involved in somatic embryogenesis. Acts as a positive regulator of BHLH109. This Arabidopsis thaliana (Mouse-ear cress) protein is Basic leucine zipper 4.